The sequence spans 310 residues: U-megalopygitoxin(8)-Mo15 (310 aa).

Positions 1 to 27 are cleaved as a signal peptide; the sequence is MARFSSKNLTKLFQYLVLSLLSPVAFG.

This sequence belongs to the megalysin family. Post-translationally, contains 3 disulfide bonds. Expressed by the venom apparatus.

It is found in the secreted. It localises to the target cell membrane. May function as a large pore-forming protein. The polypeptide is U-megalopygitoxin(8)-Mo15 (Megalopyge opercularis (Southern flannel moth)).